The following is a 304-amino-acid chain: Glutaminase (304 aa).

The substrate site is built by Ser63, Asn114, Glu158, Asn165, Tyr189, Tyr240, and Val258.

It belongs to the glutaminase family. Homotetramer.

It catalyses the reaction L-glutamine + H2O = L-glutamate + NH4(+). This Shewanella baltica (strain OS223) protein is Glutaminase.